The chain runs to 210 residues: MRNVQIALTKGRLEKHVIPLFEQIGMDCSEMMDKGRKLTFKSNNSNVSFILVKAVDVATYVEHGVADIGIVGKDILMEYEKDVYEMIDLQVGCCKLCIASIPAYDPKKYRKKRIATKYPSITSRYFCDKGEDVEIIKIEGSVEIAPLLGLVDAIVDIVETGKTLQENGLIVLEEMYPISARMIVNKAALKMKKDEIFNIINKIECIVSKK.

This sequence belongs to the ATP phosphoribosyltransferase family. Short subfamily. As to quaternary structure, heteromultimer composed of HisG and HisZ subunits.

The protein resides in the cytoplasm. It catalyses the reaction 1-(5-phospho-beta-D-ribosyl)-ATP + diphosphate = 5-phospho-alpha-D-ribose 1-diphosphate + ATP. It functions in the pathway amino-acid biosynthesis; L-histidine biosynthesis; L-histidine from 5-phospho-alpha-D-ribose 1-diphosphate: step 1/9. In terms of biological role, catalyzes the condensation of ATP and 5-phosphoribose 1-diphosphate to form N'-(5'-phosphoribosyl)-ATP (PR-ATP). Has a crucial role in the pathway because the rate of histidine biosynthesis seems to be controlled primarily by regulation of HisG enzymatic activity. The polypeptide is ATP phosphoribosyltransferase (Bacillus cytotoxicus (strain DSM 22905 / CIP 110041 / 391-98 / NVH 391-98)).